Consider the following 366-residue polypeptide: Glutamate 5-kinase (366 aa).

Residue lysine 17 participates in ATP binding. Residues serine 57, aspartate 144, and asparagine 156 each coordinate substrate. Residues 176 to 177 (SD) and 216 to 222 (TGGMASK) each bind ATP. The PUA domain occupies 278–352 (QGILHIDEGA…GKSTQELPAE (75 aa)).

Belongs to the glutamate 5-kinase family.

It is found in the cytoplasm. It catalyses the reaction L-glutamate + ATP = L-glutamyl 5-phosphate + ADP. The protein operates within amino-acid biosynthesis; L-proline biosynthesis; L-glutamate 5-semialdehyde from L-glutamate: step 1/2. Its function is as follows. Catalyzes the transfer of a phosphate group to glutamate to form L-glutamate 5-phosphate. This chain is Glutamate 5-kinase, found in Rhodococcus opacus (strain B4).